The chain runs to 489 residues: CUGBP Elav-like family member 1-B (489 aa).

RRM domains lie at 16 to 99 (IKMF…PADS), 108 to 188 (RKLF…FADT), and 404 to 482 (ANLF…LKRS).

It belongs to the CELF/BRUNOL family. Oligomer. Oligomerization is required for RNA-binding and EDEN-dependent deadenylation. Phosphorylated during oocyte maturation and dephosphorylated following egg activation. Dephosphorylation is calcium dependent and correlates with the increase in the activity of EDEN-dependent deadenylation.

It is found in the nucleus. Its subcellular location is the cytoplasm. Its function is as follows. RNA-binding protein implicated in the regulation of several post-transcriptional events. May be involved in pre-mRNA alternative splicing, mRNA translation activation and stability. Mediates the rapid and sequence-specific cytoplasmic deadenylation of EDEN-containing maternal mRNAs following fertilization. Binds to AU-rich sequences (AREs) of jun mRNA. Binds to the embryonic deadenylation element (EDEN) motif localized in the 3'-UTR of maternal mRNAs. Binds to RNA containing several repeats of the consensus sequence 5'-UGU-3'. EDEN-dependent deadenylation is enhanced by the presence of an additional cis element composed of three AUU repeats. This is CUGBP Elav-like family member 1-B (cugbp1-b) from Xenopus laevis (African clawed frog).